The primary structure comprises 457 residues: Siroheme synthase (457 aa).

A precorrin-2 dehydrogenase /sirohydrochlorin ferrochelatase region spans residues 1–204; the sequence is MDHLPIFCQL…ADEKAVNATT (204 aa). NAD(+) is bound by residues 22–23 and 43–44; these read DV and LT. Serine 128 carries the phosphoserine modification. A uroporphyrinogen-III C-methyltransferase region spans residues 216–457; the sequence is GEVVLVGAGP…RDKLNWFSNY (242 aa). Proline 225 provides a ligand contact to S-adenosyl-L-methionine. Aspartate 248 functions as the Proton acceptor in the catalytic mechanism. The active-site Proton donor is the lysine 270. S-adenosyl-L-methionine is bound by residues 301 to 303, isoleucine 306, 331 to 332, methionine 382, and glycine 411; these read GGD and TA.

This sequence in the N-terminal section; belongs to the precorrin-2 dehydrogenase / sirohydrochlorin ferrochelatase family. The protein in the C-terminal section; belongs to the precorrin methyltransferase family.

The enzyme catalyses uroporphyrinogen III + 2 S-adenosyl-L-methionine = precorrin-2 + 2 S-adenosyl-L-homocysteine + H(+). It catalyses the reaction precorrin-2 + NAD(+) = sirohydrochlorin + NADH + 2 H(+). It carries out the reaction siroheme + 2 H(+) = sirohydrochlorin + Fe(2+). It functions in the pathway cofactor biosynthesis; adenosylcobalamin biosynthesis; precorrin-2 from uroporphyrinogen III: step 1/1. It participates in cofactor biosynthesis; adenosylcobalamin biosynthesis; sirohydrochlorin from precorrin-2: step 1/1. The protein operates within porphyrin-containing compound metabolism; siroheme biosynthesis; precorrin-2 from uroporphyrinogen III: step 1/1. Its pathway is porphyrin-containing compound metabolism; siroheme biosynthesis; siroheme from sirohydrochlorin: step 1/1. It functions in the pathway porphyrin-containing compound metabolism; siroheme biosynthesis; sirohydrochlorin from precorrin-2: step 1/1. In terms of biological role, multifunctional enzyme that catalyzes the SAM-dependent methylations of uroporphyrinogen III at position C-2 and C-7 to form precorrin-2 via precorrin-1. Then it catalyzes the NAD-dependent ring dehydrogenation of precorrin-2 to yield sirohydrochlorin. Finally, it catalyzes the ferrochelation of sirohydrochlorin to yield siroheme. The chain is Siroheme synthase from Salmonella dublin (strain CT_02021853).